We begin with the raw amino-acid sequence, 183 residues long: ATP synthase subunit delta (183 aa).

The protein belongs to the ATPase delta chain family. In terms of assembly, F-type ATPases have 2 components, F(1) - the catalytic core - and F(0) - the membrane proton channel. F(1) has five subunits: alpha(3), beta(3), gamma(1), delta(1), epsilon(1). F(0) has three main subunits: a(1), b(2) and c(10-14). The alpha and beta chains form an alternating ring which encloses part of the gamma chain. F(1) is attached to F(0) by a central stalk formed by the gamma and epsilon chains, while a peripheral stalk is formed by the delta and b chains.

The protein resides in the cell inner membrane. Its function is as follows. F(1)F(0) ATP synthase produces ATP from ADP in the presence of a proton or sodium gradient. F-type ATPases consist of two structural domains, F(1) containing the extramembraneous catalytic core and F(0) containing the membrane proton channel, linked together by a central stalk and a peripheral stalk. During catalysis, ATP synthesis in the catalytic domain of F(1) is coupled via a rotary mechanism of the central stalk subunits to proton translocation. This protein is part of the stalk that links CF(0) to CF(1). It either transmits conformational changes from CF(0) to CF(1) or is implicated in proton conduction. The protein is ATP synthase subunit delta of Nitratidesulfovibrio vulgaris (strain DSM 19637 / Miyazaki F) (Desulfovibrio vulgaris).